The chain runs to 142 residues: Large ribosomal subunit protein uL11 (142 aa).

This sequence belongs to the universal ribosomal protein uL11 family. As to quaternary structure, part of the ribosomal stalk of the 50S ribosomal subunit. Interacts with L10 and the large rRNA to form the base of the stalk. L10 forms an elongated spine to which L12 dimers bind in a sequential fashion forming a multimeric L10(L12)X complex. One or more lysine residues are methylated.

In terms of biological role, forms part of the ribosomal stalk which helps the ribosome interact with GTP-bound translation factors. This chain is Large ribosomal subunit protein uL11, found in Xylella fastidiosa (strain 9a5c).